The following is a 273-amino-acid chain: Putative phosphoenolpyruvate synthase regulatory protein (273 aa).

153–160 (GVSRSGKT) provides a ligand contact to ADP.

This sequence belongs to the pyruvate, phosphate/water dikinase regulatory protein family. PSRP subfamily.

It catalyses the reaction [pyruvate, water dikinase] + ADP = [pyruvate, water dikinase]-phosphate + AMP + H(+). The enzyme catalyses [pyruvate, water dikinase]-phosphate + phosphate + H(+) = [pyruvate, water dikinase] + diphosphate. Its function is as follows. Bifunctional serine/threonine kinase and phosphorylase involved in the regulation of the phosphoenolpyruvate synthase (PEPS) by catalyzing its phosphorylation/dephosphorylation. In Polaromonas sp. (strain JS666 / ATCC BAA-500), this protein is Putative phosphoenolpyruvate synthase regulatory protein.